The chain runs to 137 residues: Acidic phospholipase A2 PL-I (137 aa).

An N-terminal signal peptide occupies residues 1-17; sequence AVCVSLLGASSIRPLPL. 7 disulfide bridges follow: Cys28–Cys89, Cys44–Cys136, Cys46–Cys62, Cys61–Cys117, Cys68–Cys110, Cys78–Cys103, and Cys96–Cys108. Residues Tyr45, Gly47, and Gly49 each coordinate Ca(2+). Residue His65 is part of the active site. Residue Asp66 participates in Ca(2+) binding. Asp111 is a catalytic residue.

Ca(2+) serves as cofactor. Expressed by the venom gland.

The protein resides in the secreted. It carries out the reaction a 1,2-diacyl-sn-glycero-3-phosphocholine + H2O = a 1-acyl-sn-glycero-3-phosphocholine + a fatty acid + H(+). Snake venom phospholipase A2 (PLA2) that may act in the hemostasis system of the prey. Exhibits hydrolytic activities, and prefers the anionic micelles (dPPC with deoxycholate) (793 umol/mg/min) to the zwitterionic micelles (dPPC with Triton X-100) (591 umol/mg/min). PLA2 catalyzes the calcium-dependent hydrolysis of the 2-acyl groups in 3-sn-phosphoglycerides. In Walterinnesia aegyptia (Desert black snake), this protein is Acidic phospholipase A2 PL-I.